The sequence spans 223 residues: Urease accessory protein UreG (223 aa).

The disordered stretch occupies residues 1–31 (MAKHSHDHTHDHHDRPRRVRKPGEPLRIGVG). 32–39 (GPVGSGKT) serves as a coordination point for GTP.

Belongs to the SIMIBI class G3E GTPase family. UreG subfamily. In terms of assembly, homodimer. UreD, UreF and UreG form a complex that acts as a GTP-hydrolysis-dependent molecular chaperone, activating the urease apoprotein by helping to assemble the nickel containing metallocenter of UreC. The UreE protein probably delivers the nickel.

The protein resides in the cytoplasm. Its function is as follows. Facilitates the functional incorporation of the urease nickel metallocenter. This process requires GTP hydrolysis, probably effectuated by UreG. This chain is Urease accessory protein UreG, found in Mycobacterium marinum (strain ATCC BAA-535 / M).